Reading from the N-terminus, the 285-residue chain is Ribosomal RNA large subunit methyltransferase F (285 aa).

It belongs to the methyltransferase superfamily. METTL16/RlmF family.

It localises to the cytoplasm. The enzyme catalyses adenosine(1618) in 23S rRNA + S-adenosyl-L-methionine = N(6)-methyladenosine(1618) in 23S rRNA + S-adenosyl-L-homocysteine + H(+). Specifically methylates the adenine in position 1618 of 23S rRNA. The chain is Ribosomal RNA large subunit methyltransferase F from Christiangramia forsetii (strain DSM 17595 / CGMCC 1.15422 / KT0803) (Gramella forsetii).